A 107-amino-acid chain; its full sequence is U1-lycotoxin-Ls1c (107 aa).

The N-terminal stretch at Met-1 to Ser-20 is a signal peptide. Residues Glu-21–Arg-41 constitute a propeptide that is removed on maturation. 4 cysteine pairs are disulfide-bonded: Cys-44/Cys-59, Cys-51/Cys-68, Cys-58/Cys-86, and Cys-70/Cys-84.

This sequence belongs to the neurotoxin 19 (CSTX) family. 04 (U1-Lctx) subfamily. As to expression, expressed by the venom gland.

The protein localises to the secreted. This is U1-lycotoxin-Ls1c from Lycosa singoriensis (Wolf spider).